The following is a 167-amino-acid chain: Transcription factor HES-5 (167 aa).

Residues 16 to 72 (KNRLRKPVVEKMRRDRINSSIEQLKLLLEQEFARHQPNSKLEKADILEMAVSYLKHS) form the bHLH domain. One can recognise an Orange domain in the interval 88 to 119 (YSEGYSWCLQEAVQFLTLHAASDTQMKLLYHF). Positions 124–138 (APAAPAKEPPAPGAA) are enriched in pro residues. The segment at 124–167 (APAAPAKEPPAPGAAPQPARSSAKAAAAAVSTSRQPACGLWRPW) is disordered. Residues 139–160 (PQPARSSAKAAAAAVSTSRQPA) are compositionally biased toward low complexity. The WRPW motif motif lies at 164 to 167 (WRPW).

Transcription repression requires formation of a complex with a corepressor protein of the Groucho/TLE family.

The protein resides in the nucleus. Functionally, transcriptional repressor of genes that require a bHLH protein for their transcription. Plays an important role as neurogenesis negative regulator. The chain is Transcription factor HES-5 (Hes5) from Mus musculus (Mouse).